Consider the following 175-residue polypeptide: Large ribosomal subunit protein uL10 (175 aa).

It belongs to the universal ribosomal protein uL10 family. In terms of assembly, part of the ribosomal stalk of the 50S ribosomal subunit. The N-terminus interacts with L11 and the large rRNA to form the base of the stalk. The C-terminus forms an elongated spine to which L12 dimers bind in a sequential fashion forming a multimeric L10(L12)X complex.

Forms part of the ribosomal stalk, playing a central role in the interaction of the ribosome with GTP-bound translation factors. This Prochlorococcus marinus (strain NATL1A) protein is Large ribosomal subunit protein uL10.